We begin with the raw amino-acid sequence, 82 residues long: Kappa-actitoxin-Avd4j (82 aa).

An N-terminal signal peptide occupies residues 1-19 (MNKALFLCLVVLCAAVVFA). Positions 20–31 (AEDLQKAKHAPF) are excised as a propeptide. 3 disulfide bridges follow: Cys38-Cys73, Cys40-Cys66, and Cys56-Cys74.

This sequence belongs to the sea anemone type 3 (BDS) potassium channel toxin family. As to expression, weakly expressed in the ectodermal tissue from the distal and proximal tentacles, body wall, and oral disk.

The protein localises to the secreted. It localises to the nematocyst. Its function is as follows. Blocks Kv3 voltage-gated potassium channels. Reduces blood pressure. The polypeptide is Kappa-actitoxin-Avd4j (Anemonia viridis (Snakelocks anemone)).